The sequence spans 277 residues: Diaminopimelate epimerase (277 aa).

Substrate contacts are provided by Asn-13, Gln-46, and Asn-65. Cys-74 serves as the catalytic Proton donor. Substrate contacts are provided by residues Gly-75–Asn-76, Asn-158, Asn-191, and Glu-209–Arg-210. The active-site Proton acceptor is the Cys-218. Substrate is bound at residue Gly-219 to Thr-220.

Belongs to the diaminopimelate epimerase family. In terms of assembly, homodimer.

It is found in the cytoplasm. The enzyme catalyses (2S,6S)-2,6-diaminopimelate = meso-2,6-diaminopimelate. It functions in the pathway amino-acid biosynthesis; L-lysine biosynthesis via DAP pathway; DL-2,6-diaminopimelate from LL-2,6-diaminopimelate: step 1/1. Catalyzes the stereoinversion of LL-2,6-diaminopimelate (L,L-DAP) to meso-diaminopimelate (meso-DAP), a precursor of L-lysine and an essential component of the bacterial peptidoglycan. The protein is Diaminopimelate epimerase of Nitrosospira multiformis (strain ATCC 25196 / NCIMB 11849 / C 71).